A 106-amino-acid polypeptide reads, in one-letter code: Small ribosomal subunit protein uS10 (106 aa).

This sequence belongs to the universal ribosomal protein uS10 family. In terms of assembly, part of the 30S ribosomal subunit.

Involved in the binding of tRNA to the ribosomes. This Prochlorococcus marinus (strain MIT 9515) protein is Small ribosomal subunit protein uS10.